Consider the following 658-residue polypeptide: Interferon-induced GTP-binding protein Mx1 (658 aa).

Residue methionine 1 is modified to N-acetylmethionine. The segment at 1-20 (MVNSKGKITDSDPGSSHLLL) is disordered. Positions 65-338 (DLALPAIAVI…LITHICKTLP (274 aa)) constitute a Dynamin-type G domain. Residues 75-82 (GDQSSGKS) are G1 motif. 75–82 (GDQSSGKS) is a GTP binding site. Residues 100–102 (VTR) are G2 motif. Positions 176–179 (DLPG) are G3 motif. GTP-binding positions include 176–180 (DLPGI) and 245–248 (TKPD). A G4 motif region spans residues 245 to 248 (TKPD). A G5 motif region spans residues 277-280 (KCRG). The bundle signaling element (BSE) stretch occupies residues 339–364 (LLEKQIKENYEKITEELQKYGSDVPE). The middle domain stretch occupies residues 364–531 (EEEHEKMFFL…HFQMEQIVYC (168 aa)). The segment at 365 to 628 (EEHEKMFFLI…KDTHNWLLKE (264 aa)) is stalk. Residues 551–554 (KDKK) form a critical for lipid-binding region. Residues 570-658 (LSDIFEHLLA…ARRRLAKFPG (89 aa)) form the GED domain.

Belongs to the TRAFAC class dynamin-like GTPase superfamily. Dynamin/Fzo/YdjA family. Homooligomer. Oligomerizes into multimeric filamentous or ring-like structures by virtue of its stalk domain. Oligomerization is critical for GTPase activity, protein stability, and recognition of viral target structures. Interacts with TRPC1, TRPC3, TRPC4, TRPC5, TRPC6 and TRPC7. Interacts with HSPA5. Interacts with TUBB/TUBB5. Interacts with DDX39A and DDX39B. ISGylated.

Its subcellular location is the cytoplasm. It localises to the endoplasmic reticulum membrane. The protein resides in the perinuclear region. Functionally, interferon-induced dynamin-like GTPase with antiviral activity. This chain is Interferon-induced GTP-binding protein Mx1 (MX1), found in Otaria byronia (South American sea lion).